The sequence spans 118 residues: ATP synthase subunit g, mitochondrial (118 aa).

Belongs to the ATPase g subunit family. F-type ATPases have 2 components, CF(1) - the catalytic core - and CF(0) - the membrane proton channel.

It localises to the mitochondrion membrane. Its function is as follows. Mitochondrial membrane ATP synthase (F(1)F(0) ATP synthase or Complex V) produces ATP from ADP in the presence of a proton gradient across the membrane which is generated by electron transport complexes of the respiratory chain. F-type ATPases consist of two structural domains, F(1) - containing the extramembraneous catalytic core, and F(0) - containing the membrane proton channel, linked together by a central stalk and a peripheral stalk. During catalysis, ATP synthesis in the catalytic domain of F(1) is coupled via a rotary mechanism of the central stalk subunits to proton translocation. Part of the complex F(0) domain. Minor subunit located with subunit a in the membrane. This Schizosaccharomyces pombe (strain 972 / ATCC 24843) (Fission yeast) protein is ATP synthase subunit g, mitochondrial (atp20).